The sequence spans 423 residues: ATP-dependent Clp protease ATP-binding subunit ClpX (423 aa).

The region spanning 1–50 (MTDDTEYRCSFCGKEHHQVDDLIAGPDVRICSECVVLSCEIVEDRRNEAL) is the ClpX-type ZB domain. Zn(2+) is bound by residues cysteine 9, cysteine 12, cysteine 31, and cysteine 34. Residue 126–133 (PTGCGKTY) coordinates ATP.

The protein belongs to the ClpX chaperone family. Component of the ClpX-ClpP complex. Forms a hexameric ring that, in the presence of ATP, binds to fourteen ClpP subunits assembled into a disk-like structure with a central cavity, resembling the structure of eukaryotic proteasomes.

ATP-dependent specificity component of the Clp protease. It directs the protease to specific substrates. Can perform chaperone functions in the absence of ClpP. The chain is ATP-dependent Clp protease ATP-binding subunit ClpX from Tropheryma whipplei (strain Twist) (Whipple's bacillus).